Reading from the N-terminus, the 378-residue chain is Quinolinate synthase (378 aa).

Histidine 59 and serine 80 together coordinate iminosuccinate. Cysteine 125 is a [4Fe-4S] cluster binding site. Iminosuccinate-binding positions include 151–153 (YAN) and serine 168. Cysteine 212 contacts [4Fe-4S] cluster. Iminosuccinate contacts are provided by residues 238–240 (HPE) and threonine 255. [4Fe-4S] cluster is bound at residue cysteine 309.

The protein belongs to the quinolinate synthase family. Type 1 subfamily. The cofactor is [4Fe-4S] cluster.

Its subcellular location is the cytoplasm. The catalysed reaction is iminosuccinate + dihydroxyacetone phosphate = quinolinate + phosphate + 2 H2O + H(+). It functions in the pathway cofactor biosynthesis; NAD(+) biosynthesis; quinolinate from iminoaspartate: step 1/1. In terms of biological role, catalyzes the condensation of iminoaspartate with dihydroxyacetone phosphate to form quinolinate. The protein is Quinolinate synthase of Burkholderia cenocepacia (strain HI2424).